The sequence spans 37 residues: Mu-agatoxin-Aa1e (37 aa).

Disulfide bonds link Cys-2–Cys-18, Cys-9–Cys-23, Cys-17–Cys-33, and Cys-25–Cys-31. At Asn-37 the chain carries Asparagine amide.

It belongs to the neurotoxin 07 (Beta/delta-agtx) family. 03 (aga-4) subfamily. Aga sub-subfamily. As to expression, expressed by the venom gland.

It is found in the secreted. Insecticidal neurotoxin that induces an irreversible spastic paralysis when injected into insects. Modifies presynaptic voltage-gated sodium channels (Nav), causing them to open at the normal resting potential of the nerve. This leads to spontaneous release of neurotransmitter and repetitive action potentials in motor neurons. The sequence is that of Mu-agatoxin-Aa1e from Agelenopsis aperta (North American funnel-web spider).